Consider the following 389-residue polypeptide: Succinate--CoA ligase [ADP-forming] subunit beta (389 aa).

The ATP-grasp domain occupies 9–236 (KELFAKHEVP…KDATDPLELK (228 aa)). ATP-binding positions include K45, 52–54 (GRG), S94, and E99. N191 and D205 together coordinate Mg(2+). Substrate-binding positions include N256 and 318 to 320 (GIT).

It belongs to the succinate/malate CoA ligase beta subunit family. In terms of assembly, heterotetramer of two alpha and two beta subunits. Requires Mg(2+) as cofactor.

The enzyme catalyses succinate + ATP + CoA = succinyl-CoA + ADP + phosphate. It carries out the reaction GTP + succinate + CoA = succinyl-CoA + GDP + phosphate. It functions in the pathway carbohydrate metabolism; tricarboxylic acid cycle; succinate from succinyl-CoA (ligase route): step 1/1. Functionally, succinyl-CoA synthetase functions in the citric acid cycle (TCA), coupling the hydrolysis of succinyl-CoA to the synthesis of either ATP or GTP and thus represents the only step of substrate-level phosphorylation in the TCA. The beta subunit provides nucleotide specificity of the enzyme and binds the substrate succinate, while the binding sites for coenzyme A and phosphate are found in the alpha subunit. The polypeptide is Succinate--CoA ligase [ADP-forming] subunit beta (Rhodococcus jostii (strain RHA1)).